A 43-amino-acid chain; its full sequence is Lanthionine-containing peptide SapB (43 aa).

Positions 1–21 (MALLDLQAMDTPAEDSFGELR) are cleaved as a signal peptide. 2 consecutive cross-links (lanthionine (Ser-Cys)) follow at residues 24-31 (SQVSLLVC) and 34-41 (SSLSVVLC). S27 and S37 each carry 2,3-didehydroalanine (Ser).

The protein belongs to the lanthionine-containing morphogen protein family. Maturation involves the enzymatic conversion of Ser into dehydrated AA and the formation of thioether bonds with cysteine. This is followed by membrane translocation and cleavage of the modified precursor.

Its function is as follows. Lanthionine-containing peptide devoid of antibiotic properties, involved in the formation of aerial mycelium. Suggested to self-assemble at air-water interfaces, thus providing a film of surfactant through which nascent aerial hyphae can emerge. The aerial hyphae differentiate further into spores. This Streptomyces griseus protein is Lanthionine-containing peptide SapB (ramS).